Here is a 610-residue protein sequence, read N- to C-terminus: MCGIVGAVAQRDITPILIEGLKRLEYRGYDSCGVALYMDGHLRRTRSTKRVAELSEQVAEDKLGGFTGIAHTRWATHGIPATYNAHPHFSAQGKDEPRIALVHNGIIENHEELRQELQGVGYVFESQTDTEVIAHLVNHLYAGDLFEAVQQAVRRLQGAYAIAVFCRDEPHRVVGARQGSPLVVGLGQNENFLASDALALAGTTDQIIYLEDGDVVDLQLARVWIVDQAGKQVERKAHTVQVHTGAAELGPYRHFMQKEIFEQPRAVGDTLQDIESITPELFGDGAYKVFKEIDSLLILACGTSYYAGLTAKYWIESIARIPVAVEIASEYRYRDSVPNPNALVVTISQSGETADTLAALKHVRSLGMQHTLTVCNVVTSAMVRECELAYITRAGVEIGVASTKAFTTQLTALFLLTLALAQTRGRLTEEQEAEHLKALRHLPAAIGAVLALEPQIMAWADRFASKENALFLGRGMHYPIALEGALKLKEISYIHAEAYPAGELKHGPLALVTEHMPVVTIAPKDALLEKLKSNMQEVRARGGELYVFADADSKIANAEGMHVIRMPEYYGALSPIVHTIPLQLLSYHTACVRGTDVDKPRNLAKSVTVE.

Cysteine 2 functions as the Nucleophile; for GATase activity in the catalytic mechanism. In terms of domain architecture, Glutamine amidotransferase type-2 spans cysteine 2–alanine 221. SIS domains follow at residues alanine 286 to arginine 426 and tryptophan 459 to proline 600. Catalysis depends on lysine 605, which acts as the For Fru-6P isomerization activity.

Homodimer.

It is found in the cytoplasm. It carries out the reaction D-fructose 6-phosphate + L-glutamine = D-glucosamine 6-phosphate + L-glutamate. Functionally, catalyzes the first step in hexosamine metabolism, converting fructose-6P into glucosamine-6P using glutamine as a nitrogen source. The protein is Glutamine--fructose-6-phosphate aminotransferase [isomerizing] of Bordetella pertussis (strain Tohama I / ATCC BAA-589 / NCTC 13251).